The primary structure comprises 481 residues: Chromosomal replication initiator protein DnaA (481 aa).

The interval M1–R71 is domain I, interacts with DnaA modulators. Residues R71 to T143 are domain II. The segment covering A86–S96 has biased composition (low complexity). The disordered stretch occupies residues A86–T110. Residues R144–S361 are domain III, AAA+ region. Residues G189, G191, K192, and T193 each contribute to the ATP site. A domain IV, binds dsDNA region spans residues R362–N481.

This sequence belongs to the DnaA family. As to quaternary structure, oligomerizes as a right-handed, spiral filament on DNA at oriC.

It localises to the cytoplasm. In terms of biological role, plays an essential role in the initiation and regulation of chromosomal replication. ATP-DnaA binds to the origin of replication (oriC) to initiate formation of the DNA replication initiation complex once per cell cycle. Binds the DnaA box (a 9 base pair repeat at the origin) and separates the double-stranded (ds)DNA. Forms a right-handed helical filament on oriC DNA; dsDNA binds to the exterior of the filament while single-stranded (ss)DNA is stabiized in the filament's interior. The ATP-DnaA-oriC complex binds and stabilizes one strand of the AT-rich DNA unwinding element (DUE), permitting loading of DNA polymerase. After initiation quickly degrades to an ADP-DnaA complex that is not apt for DNA replication. Binds acidic phospholipids. The chain is Chromosomal replication initiator protein DnaA from Laribacter hongkongensis (strain HLHK9).